The sequence spans 574 residues: Glutamate--tRNA ligase (574 aa).

The 'HIGH' region motif lies at 109–119 (PNPDFVIHMGN).

Belongs to the class-I aminoacyl-tRNA synthetase family. Glutamate--tRNA ligase type 2 subfamily.

The protein localises to the cytoplasm. It catalyses the reaction tRNA(Glu) + L-glutamate + ATP = L-glutamyl-tRNA(Glu) + AMP + diphosphate. Its function is as follows. Catalyzes the attachment of glutamate to tRNA(Glu) in a two-step reaction: glutamate is first activated by ATP to form Glu-AMP and then transferred to the acceptor end of tRNA(Glu). The sequence is that of Glutamate--tRNA ligase from Aeropyrum pernix (strain ATCC 700893 / DSM 11879 / JCM 9820 / NBRC 100138 / K1).